The chain runs to 380 residues: Protein-tyrosine sulfotransferase A (380 aa).

The Cytoplasmic portion of the chain corresponds to 1 to 6 (MRKNRE). The chain crosses the membrane as a helical; Signal-anchor for type II membrane protein span at residues 7-27 (LLLVLFLVVFILFYFITARTA). Residues 28–380 (DDPYYSNHRE…PIVDNEVSKL (353 aa)) are Lumenal-facing. Asn-66 is a glycosylation site (N-linked (GlcNAc...) asparagine). 79–83 (RSGTT) is a 3'-phosphoadenylyl sulfate binding site. A disulfide bond links Cys-97 and Cys-157. Glu-100 (proton donor/acceptor) is an active-site residue. The interaction with peptide substrate stretch occupies residues 102-106 (RVIPR). Residues Arg-184, Ser-192, and Arg-196 each contribute to the 3'-phosphoadenylyl sulfate site. Residues Cys-226 and Cys-234 are joined by a disulfide bond. Residues Tyr-239, 284-293 (SSDQVVKPVN), and Lys-299 contribute to the 3'-phosphoadenylyl sulfate site.

Belongs to the protein sulfotransferase family.

The protein resides in the golgi apparatus membrane. The enzyme catalyses L-tyrosyl-[protein] + 3'-phosphoadenylyl sulfate = O-sulfo-L-tyrosine-[protein] + adenosine 3',5'-bisphosphate + H(+). Its function is as follows. Catalyzes the O-sulfation of tyrosine residues within acidic motifs of polypeptides, using 3'-phosphoadenylyl sulfate (PAPS) as cosubstrate. The protein is Protein-tyrosine sulfotransferase A (tpst-1) of Caenorhabditis elegans.